The following is a 130-amino-acid chain: Small ribosomal subunit protein uS11 (130 aa).

This sequence belongs to the universal ribosomal protein uS11 family. Part of the 30S ribosomal subunit. Interacts with proteins S7 and S18. Binds to IF-3.

Located on the platform of the 30S subunit, it bridges several disparate RNA helices of the 16S rRNA. Forms part of the Shine-Dalgarno cleft in the 70S ribosome. The protein is Small ribosomal subunit protein uS11 of Shewanella amazonensis (strain ATCC BAA-1098 / SB2B).